We begin with the raw amino-acid sequence, 319 residues long: HTH-type transcriptional regulator YidZ (319 aa).

An HTH lysR-type domain is found at 8–65; the sequence is LDLNLLLCLQLLMQERSVTKAAKRMNVTPSAVSKSLAKLRAWFDDPLFVNSPLGLSPT. The H-T-H motif DNA-binding region spans 25 to 44; that stretch reads VTKAAKRMNVTPSAVSKSLA.

The protein belongs to the LysR transcriptional regulatory family.

Functionally, involved in anaerobic NO protection. The chain is HTH-type transcriptional regulator YidZ from Escherichia coli O6:H1 (strain CFT073 / ATCC 700928 / UPEC).